A 336-amino-acid chain; its full sequence is Fructose-1,6-bisphosphatase class 1 (336 aa).

4 residues coordinate Mg(2+): Glu90, Asp112, Leu114, and Asp115. Residues 115-118, Asn211, and Lys277 each bind substrate; that span reads DGSS. A Mg(2+)-binding site is contributed by Glu283.

It belongs to the FBPase class 1 family. Homotetramer. Requires Mg(2+) as cofactor.

It localises to the cytoplasm. It catalyses the reaction beta-D-fructose 1,6-bisphosphate + H2O = beta-D-fructose 6-phosphate + phosphate. It functions in the pathway carbohydrate biosynthesis; gluconeogenesis. This is Fructose-1,6-bisphosphatase class 1 from Pseudomonas savastanoi pv. phaseolicola (strain 1448A / Race 6) (Pseudomonas syringae pv. phaseolicola (strain 1448A / Race 6)).